Consider the following 333-residue polypeptide: Ketol-acid reductoisomerase (NADP(+)) (333 aa).

The KARI N-terminal Rossmann domain maps to 2 to 182 (AELFYDDDAD…GGTRAGVIKT (181 aa)). NADP(+) contacts are provided by residues 25–28 (YGSQ), serine 51, serine 53, and 83–86 (DPIQ). Histidine 108 is a catalytic residue. Residue glycine 134 participates in NADP(+) binding. A KARI C-terminal knotted domain is found at 183 to 328 (TFTEETETDL…RELRKLMSWV (146 aa)). Mg(2+) contacts are provided by aspartate 191, glutamate 195, glutamate 227, and glutamate 231. Substrate is bound at residue serine 252.

Belongs to the ketol-acid reductoisomerase family. It depends on Mg(2+) as a cofactor.

It carries out the reaction (2R)-2,3-dihydroxy-3-methylbutanoate + NADP(+) = (2S)-2-acetolactate + NADPH + H(+). It catalyses the reaction (2R,3R)-2,3-dihydroxy-3-methylpentanoate + NADP(+) = (S)-2-ethyl-2-hydroxy-3-oxobutanoate + NADPH + H(+). It participates in amino-acid biosynthesis; L-isoleucine biosynthesis; L-isoleucine from 2-oxobutanoate: step 2/4. The protein operates within amino-acid biosynthesis; L-valine biosynthesis; L-valine from pyruvate: step 2/4. Functionally, involved in the biosynthesis of branched-chain amino acids (BCAA). Catalyzes an alkyl-migration followed by a ketol-acid reduction of (S)-2-acetolactate (S2AL) to yield (R)-2,3-dihydroxy-isovalerate. In the isomerase reaction, S2AL is rearranged via a Mg-dependent methyl migration to produce 3-hydroxy-3-methyl-2-ketobutyrate (HMKB). In the reductase reaction, this 2-ketoacid undergoes a metal-dependent reduction by NADPH to yield (R)-2,3-dihydroxy-isovalerate. This chain is Ketol-acid reductoisomerase (NADP(+)), found in Streptomyces griseus subsp. griseus (strain JCM 4626 / CBS 651.72 / NBRC 13350 / KCC S-0626 / ISP 5235).